We begin with the raw amino-acid sequence, 225 residues long: Sugar fermentation stimulation protein homolog (225 aa).

The protein belongs to the SfsA family.

The polypeptide is Sugar fermentation stimulation protein homolog (Sulfurisphaera tokodaii (strain DSM 16993 / JCM 10545 / NBRC 100140 / 7) (Sulfolobus tokodaii)).